The primary structure comprises 369 residues: UDP-N-acetylenolpyruvoylglucosamine reductase (369 aa).

Positions 29–202 (VGPIARRVIT…LEVEFALDPS (174 aa)) constitute an FAD-binding PCMH-type domain. R176 is an active-site residue. The active-site Proton donor is S257. E361 is an active-site residue.

The protein belongs to the MurB family. FAD serves as cofactor.

It localises to the cytoplasm. The enzyme catalyses UDP-N-acetyl-alpha-D-muramate + NADP(+) = UDP-N-acetyl-3-O-(1-carboxyvinyl)-alpha-D-glucosamine + NADPH + H(+). Its pathway is cell wall biogenesis; peptidoglycan biosynthesis. In terms of biological role, cell wall formation. This Mycobacterium tuberculosis (strain ATCC 25177 / H37Ra) protein is UDP-N-acetylenolpyruvoylglucosamine reductase.